Reading from the N-terminus, the 395-residue chain is Protein maternal effect lethal 26 (395 aa).

Residues Lys-41–Ile-162 enclose the MATH domain. The BTB domain occupies Cys-201 to Ile-269.

In terms of assembly, interacts (via BTB domain) with cul-3. Seems to be a component of a E3 ubiquitin-protein ligase complex containing cul-3. Interacts (probably via MATH domain) with mei-1, which targets mei-1 for ubiquitin-mediated proteolysis. Interacts (probably via MATH domain) with ppfr-1, the regulatory subunit of the PP4 complex; targets ppfr-1 for ubiquitin-mediated proteolysis. May interact (via MATH domain) with unc-89 (via Ig-like C2-type domain 2/3 and, Ig-like C2-type domain 50 and fibronectin type-III domain 2). In terms of tissue distribution, expressed in body wall muscles.

The protein localises to the cytoplasm. Its subcellular location is the myofibril. The protein resides in the sarcomere. It localises to the m line. It is found in the i band. It functions in the pathway protein modification; protein ubiquitination. Its function is as follows. Probable substrate-specific adapter of an E3 ubiquitin-protein ligase complex which mediates the ubiquitination and subsequent proteasomal degradation of target proteins. Controls degradation of microtubule severing protein mei-1 after meiosis. Controls degradation of ppfr-1, the regulatory subunit of PP4 complex, after meiosis. In body wall muscles, involved in the organization of myosin thick filaments, likely by regulating the degradation of mei-1 downstream of unc-89. May also activate the TORC1 pathway. In Caenorhabditis elegans, this protein is Protein maternal effect lethal 26 (mel-26).